The sequence spans 715 residues: MSGGAVAFLLLVAAAAVANAAVTYDHRSLTINGQRRILISGSIHYPRSTPEMWPDLIQKAKDGGLDVIQTYVFWNGHEPVQGQYYFSDRYDLVRFVKLVKQAGLYVNLRIGPYVCAEWNYGGFPVWLKYVPGISFRTDNGPFKAAMQTFVEKIVSMMKSEGLFEWQGGPIILAQVENEYGPMESVMGSGAKSYVDWAAKMAVATNAGVPWIMCKQDDAPDPVINTCNGFYCDDFTPNSKNKPSMWTEAWSGWFTAFGGTVPQRPVEDLAFAVARFIQKGGSFINYYMYHGGTNFDRTAGGPFIATSYDYDAPIDEYGLLRQPKWGHLTNLHKAIKQAETALVAGDPTVQNIGNYEKAYVFRSSSGDCAAFLSNFHTSAAARVAFNGRRYDLPAWSISVLPDCRTAVYNTATVTAASSPAKMNPAGGFTWQSYGEATNSLDETAFTKDGLVEQLSMTWDKSDYLWYTTYVNIDSGEQFLKSGQWPQLTVYSAGHSVQVFVNGQYFGNAYGGYDGPKLTYSGYVKMWQGSNKISILSSAVGLPNVGTHYETWNIGVLGPVTLSGLNEGKRDLSKQKWTYQIGLKGEKLGVHSVSGSSSVEWGGAAGKQPVTWHRAYFNAPAGGAPVALDLGSMGKGQAWVNGHLIGRYWSYKASGNCGGCSYAGTYSEKKCQANCGDASQRWYHVPRSWLNPSGNLVVLLEEFGGDLSGVTLMTRTT.

The signal sequence occupies residues methionine 1–alanine 20. Glutamate 178 functions as the Proton donor in the catalytic mechanism. The Nucleophile role is filled by glutamate 247.

This sequence belongs to the glycosyl hydrolase 35 family.

Its subcellular location is the secreted. It localises to the extracellular space. It is found in the apoplast. It catalyses the reaction Hydrolysis of terminal non-reducing beta-D-galactose residues in beta-D-galactosides.. The sequence is that of Beta-galactosidase 9 from Oryza sativa subsp. japonica (Rice).